Consider the following 338-residue polypeptide: Tryptophan--tRNA ligase (338 aa).

ATP-binding positions include 12–14 and 20–21; these read QPT and GN. The 'HIGH' region signature appears at 13–21; the sequence is PTGDLHIGN. Residue Asp136 participates in L-tryptophan binding. Residues 148–150, Ile191, and 200–204 contribute to the ATP site; these read GED and KMSKS. Positions 200-204 match the 'KMSKS' region motif; the sequence is KMSKS.

This sequence belongs to the class-I aminoacyl-tRNA synthetase family. As to quaternary structure, homodimer.

Its subcellular location is the cytoplasm. The catalysed reaction is tRNA(Trp) + L-tryptophan + ATP = L-tryptophyl-tRNA(Trp) + AMP + diphosphate + H(+). Functionally, catalyzes the attachment of tryptophan to tRNA(Trp). The chain is Tryptophan--tRNA ligase from Prochlorococcus marinus subsp. pastoris (strain CCMP1986 / NIES-2087 / MED4).